The sequence spans 436 residues: F-box/LRR-repeat protein 20 (436 aa).

One can recognise an F-box domain in the interval 22 to 68 (AVINKKLPKELLLRIFSFLDVVTLCRCAQVSRAWNVLALDGSNWQRI). LRR repeat units lie at residues 74–100 (QRDI…SLRG), 101–126 (CLGV…NLNG), 127–152 (CTKT…DLAS), 153–178 (CTSI…NISW), 179–204 (CDQV…FLKG), 205–230 (CTQL…NLQT), 231–256 (CLQI…CASG), 257–282 (CSNI…EVAR), 283–308 (CSQL…DLEE), 309–334 (CVQI…SLSH), 335–363 (CELI…ELDN), 364–388 (CPLI…ELYD), and 389–414 (CQQI…AYFA). Thr417 carries the phosphothreonine modification. Ser421 carries the post-translational modification Phosphoserine.

Interacts with SKP1 and CUL1.

It is found in the cytoplasm. In terms of biological role, substrate-recognition component of the SCF (SKP1-CUL1-F-box protein)-type E3 ubiquitin ligase complex. Role in neural transmission. The sequence is that of F-box/LRR-repeat protein 20 (FBXL20) from Bos taurus (Bovine).